Reading from the N-terminus, the 420-residue chain is UDP-N-acetylglucosamine 1-carboxyvinyltransferase (420 aa).

22–23 provides a ligand contact to phosphoenolpyruvate; sequence KN. R91 is a binding site for UDP-N-acetyl-alpha-D-glucosamine. Catalysis depends on C115, which acts as the Proton donor. C115 carries the 2-(S-cysteinyl)pyruvic acid O-phosphothioketal modification. UDP-N-acetyl-alpha-D-glucosamine is bound by residues 120-124, 160-163, D305, and I327; these read RPVDL and KVSV.

This sequence belongs to the EPSP synthase family. MurA subfamily.

The protein resides in the cytoplasm. It carries out the reaction phosphoenolpyruvate + UDP-N-acetyl-alpha-D-glucosamine = UDP-N-acetyl-3-O-(1-carboxyvinyl)-alpha-D-glucosamine + phosphate. The protein operates within cell wall biogenesis; peptidoglycan biosynthesis. Cell wall formation. Adds enolpyruvyl to UDP-N-acetylglucosamine. The sequence is that of UDP-N-acetylglucosamine 1-carboxyvinyltransferase from Proteus mirabilis (strain HI4320).